The primary structure comprises 545 residues: CTP synthase (545 aa).

Positions 1-266 (MTTNYIFVTG…DDYICKRFSL (266 aa)) are amidoligase domain. Ser14 contacts CTP. Residue Ser14 participates in UTP binding. Residues 15-20 (SLGKGI) and Asp72 each bind ATP. Mg(2+) contacts are provided by Asp72 and Glu140. CTP contacts are provided by residues 147–149 (DIE), 187–192 (KTKPTQ), and Lys223. UTP contacts are provided by residues 187–192 (KTKPTQ) and Lys223. Residue 239 to 241 (KDV) participates in ATP binding. A Glutamine amidotransferase type-1 domain is found at 291 to 542 (TIGMVGKYIE…VKAASEHQKR (252 aa)). L-glutamine is bound at residue Gly352. Residue Cys379 is the Nucleophile; for glutamine hydrolysis of the active site. Residues 380–383 (LGMQ), Glu403, and Arg470 contribute to the L-glutamine site. Catalysis depends on residues His515 and Glu517.

It belongs to the CTP synthase family. In terms of assembly, homotetramer.

It carries out the reaction UTP + L-glutamine + ATP + H2O = CTP + L-glutamate + ADP + phosphate + 2 H(+). It catalyses the reaction L-glutamine + H2O = L-glutamate + NH4(+). The enzyme catalyses UTP + NH4(+) + ATP = CTP + ADP + phosphate + 2 H(+). The protein operates within pyrimidine metabolism; CTP biosynthesis via de novo pathway; CTP from UDP: step 2/2. With respect to regulation, allosterically activated by GTP, when glutamine is the substrate; GTP has no effect on the reaction when ammonia is the substrate. The allosteric effector GTP functions by stabilizing the protein conformation that binds the tetrahedral intermediate(s) formed during glutamine hydrolysis. Inhibited by the product CTP, via allosteric rather than competitive inhibition. Its function is as follows. Catalyzes the ATP-dependent amination of UTP to CTP with either L-glutamine or ammonia as the source of nitrogen. Regulates intracellular CTP levels through interactions with the four ribonucleotide triphosphates. In Salmonella arizonae (strain ATCC BAA-731 / CDC346-86 / RSK2980), this protein is CTP synthase.